The primary structure comprises 545 residues: Capsular polysaccharide phosphotransferase SacB (545 aa).

It belongs to the stealth family.

Functionally, may be the polymerase that links individual UDP-N-acetyl-D-mannosamine monomers. In serotype A the capsule is composed of repeated units of (alpha 1-6)-linked N-acetyl-D-mannosamine-1-phosphate. This chain is Capsular polysaccharide phosphotransferase SacB (sacB), found in Neisseria meningitidis serogroup A.